Consider the following 66-residue polypeptide: Alpha-conotoxin RegIIA (66 aa).

An N-terminal signal peptide occupies residues 1-21 (MGMRMMFTVFLLVVLTTTVVS). A propeptide spanning residues 22 to 49 (STSVRASDGRNAAADNRASDLIAQIVRR) is cleaved from the precursor. Cystine bridges form between Cys-51-Cys-57 and Cys-52-Cys-65. The segment at 53–55 (SHP) is ser-Xaa-Pro motif, crucial for potent interaction with nAChR. Cys-65 carries the cysteine amide modification.

It belongs to the conotoxin A superfamily. In terms of tissue distribution, expressed by the venom duct.

The protein resides in the secreted. In terms of biological role, alpha-conotoxins act on postsynaptic membranes, they bind to the nicotinic acetylcholine receptors (nAChR) and thus inhibit them. This toxin potently inhibits alpha-3 containing subunit nAChR. It inhibits alpha-3-beta-2/CHRNA3-CHRNB2 (IC(50)=10.7-33 nM (rat)/132.4-704.1 nM (human)) and alpha-3-beta-4/CHRNA3-CHRNB4 (IC(50)=47.3-97 nM (rat)/52.1 nM (human)). It also inhibits alpha-7/CHRNA7 nAChR with IC(50)=103-210 nM (human)/41-61.2 nM (rat) nAChRs. It is more potent on alpha-3-beta-2 receptors in human than in rat, due to a variation (Pro vs Gln) in alpha-3 subunit in these orthologs. Conversely, does not show species-specific differences in sensitivity at the alpha-3-beta-4 receptor. In Conus regius (Crown cone), this protein is Alpha-conotoxin RegIIA.